The following is a 189-amino-acid chain: MASYSMGDLKKGLKIEIDGIPFKIVEYQHVKPGKGPAFVRIKIKSFIDGKVLEKTFHAGDKCEAPNLEDKTMQYLYDDGENCQFMDTQTYEQVAISDDDVGEAKKWMLDGMMVDVLFHNGKAIGVEVPQVVELKIIETAPNFKGDTQGSNKKPATLETGAVVQIPFHVLEGEVIRVDTVRGEYIERANK.

It belongs to the elongation factor P family.

The protein localises to the cytoplasm. It functions in the pathway protein biosynthesis; polypeptide chain elongation. Involved in peptide bond synthesis. Stimulates efficient translation and peptide-bond synthesis on native or reconstituted 70S ribosomes in vitro. Probably functions indirectly by altering the affinity of the ribosome for aminoacyl-tRNA, thus increasing their reactivity as acceptors for peptidyl transferase. This is Elongation factor P from Campylobacter jejuni subsp. doylei (strain ATCC BAA-1458 / RM4099 / 269.97).